Here is a 75-residue protein sequence, read N- to C-terminus: Translation initiation factor IF-1 (75 aa).

One can recognise an S1-like domain in the interval 1 to 72 (MSKQDLIEME…TKGRITYRLK (72 aa)).

Belongs to the IF-1 family. In terms of assembly, component of the 30S ribosomal translation pre-initiation complex which assembles on the 30S ribosome in the order IF-2 and IF-3, IF-1 and N-formylmethionyl-tRNA(fMet); mRNA recruitment can occur at any time during PIC assembly.

The protein localises to the cytoplasm. In terms of biological role, one of the essential components for the initiation of protein synthesis. Stabilizes the binding of IF-2 and IF-3 on the 30S subunit to which N-formylmethionyl-tRNA(fMet) subsequently binds. Helps modulate mRNA selection, yielding the 30S pre-initiation complex (PIC). Upon addition of the 50S ribosomal subunit IF-1, IF-2 and IF-3 are released leaving the mature 70S translation initiation complex. The protein is Translation initiation factor IF-1 of Synechocystis sp. (strain ATCC 27184 / PCC 6803 / Kazusa).